A 200-amino-acid chain; its full sequence is Pyrrolidone-carboxylate peptidase (200 aa).

Active-site residues include Glu-79, Cys-142, and His-166.

It belongs to the peptidase C15 family. Homotetramer.

It is found in the cytoplasm. It catalyses the reaction Release of an N-terminal pyroglutamyl group from a polypeptide, the second amino acid generally not being Pro.. Removes 5-oxoproline from various penultimate amino acid residues except L-proline. In Pyrococcus abyssi (strain GE5 / Orsay), this protein is Pyrrolidone-carboxylate peptidase (pcp).